A 628-amino-acid chain; its full sequence is Set1/Ash2 histone methyltransferase complex subunit ASH2 (628 aa).

An N-acetylmethionine modification is found at methionine 1. Residues 1–18 (MAAAGAGPGQEAGAGPGP) are compositionally biased toward gly residues. A PHD-type; atypical zinc finger spans residues 1–66 (MAAAGAGPGQ…SGEAEGGEAN (66 aa)). The interval 1-107 (MAAAGAGPGQ…QAGSVDEENG (107 aa)) is disordered. Residues 36–65 (AAGAAAPPGEGISAAPTVEPSSGEAEGGEA) show a composition bias toward low complexity. The segment at 67–177 (LVDVSGGLET…MCLSALANLT (111 aa)) is DNA-binding. At serine 101 the chain carries Phosphoserine. Residues 117–150 (CGICTKWFTADTFGIDTSSCLPFMTNYSFHCNVC) form a C4-type zinc finger. Basic and acidic residues predominate over residues 235-252 (LVKEHPDPGSKDPEEDYP). The disordered stretch occupies residues 235–331 (LVKEHPDPGS…AQRLPPHGYP (97 aa)). A compositionally biased stretch (polar residues) spans 270–282 (NQKQSSAVSTSGN). A compositionally biased stretch (gly residues) spans 283–295 (LNGGIAAGSSGKG). Arginine 296 is modified (asymmetric dimethylarginine; by PRMT1 and PRMT5). Phosphoserine is present on serine 316. The tract at residues 316–628 (SDPLFSAQRL…DGRRSPPWEP (313 aa)) is interaction with RBBP5. A B30.2/SPRY domain is found at 360-583 (LDCWAGKPIP…VSINFGPCFK (224 aa)).

In terms of assembly, interacts with HCFC1. Core component of several methyltransferase-containing complexes including MLL1/MLL, MLL2/3 (also named ASCOM complex) and MLL4/WBP7. Each complex is at least composed of ASH2L, RBBP5, WDR5, DPY30, one or more specific histone methyltransferases (KMT2A/MLL1, KMT2D/MLL2, KMT2C/MLL3 and KMT2B/MLL4), and the facultative components PAGR1, BACC1, CHD8, E2F6, HCFC1, HCFC2, HSP70, INO80C, KDM6A, KANSL1, LAS1L, MAX, MCRS1, MEN1, MGA, KAT8/MOF, NCOA6, PAXIP1/PTIP, PELP1, PHF20, PRP31, RING2, RUVB1/TIP49A, RUVB2/TIP49B, SENP3, TAF1, TAF4, TAF6, TAF7, TAF9, TEX10 and alpha- and beta-tubulin. Component of the SET1 complex, at least composed of the catalytic subunit (SETD1A or SETD1B), WDR5, WDR82, RBBP5, ASH2L/ASH2, CXXC1/CFP1, HCFC1 and DPY30. Found in a complex with RBBP5, ASH2L, DPY30, KMT2A, KMT2D and WDR5. Component of a histone methylation complex composed of at least ZNF335, RBBP5, ASH2L and WDR5; the complex may have histone H3-specific methyltransferase activity, however does not have specificity for 'Lys-4' of histone H3. Within the complex, interacts with ZNF335. Interacts with RBBP5. Components of this complex may associate with components of a nuclear receptor-mediated transcription complex to form a complex at least composed of ZNF335, HCFC1, CCAR2, EMSY, MKI67, RBBP5, ASH2L and WDR5. Within this complex also interacts with CCAR2 and EMSY. Interacts with DPY30. Interacts with SETD1A and SETD1B. In terms of processing, both monomethylated and dimethylated on arginine residues in the C-terminus. Arg-296 is the major site. Methylation is not required for nuclear localization, nor for MLL complex integrity or maintenance of global histone H3K4me3 levels. Ubiquitously expressed. Predominantly expressed in adult heart and testis and fetal lung and liver, with barely detectable expression in adult lung, liver, kidney, prostate, and peripheral leukocytes.

It localises to the nucleus. Its function is as follows. Transcriptional regulator. Component or associated component of some histone methyltransferase complexes which regulates transcription through recruitment of those complexes to gene promoters. Component of the Set1/Ash2 histone methyltransferase (HMT) complex, a complex that specifically methylates 'Lys-4' of histone H3, but not if the neighboring 'Lys-9' residue is already methylated. As part of the MLL1/MLL complex it is involved in methylation and dimethylation at 'Lys-4' of histone H3. May play a role in hematopoiesis. In association with RBBP5 and WDR5, stimulates the histone methyltransferase activities of KMT2A, KMT2B, KMT2C, KMT2D, SETD1A and SETD1B. The polypeptide is Set1/Ash2 histone methyltransferase complex subunit ASH2 (ASH2L) (Homo sapiens (Human)).